Here is a 166-residue protein sequence, read N- to C-terminus: Antibacterial peptide PMAP-36 (166 aa).

Residues 1 to 29 (METQRASLCLGRWSLWLLLLGLVVPSASA) form the signal peptide. A propeptide spanning residues 30 to 129 (QALSYREAVL…LDINCDEIQS (100 aa)) is cleaved from the precursor. 2 cysteine pairs are disulfide-bonded: C85–C96 and C107–C124.

Belongs to the cathelicidin family.

The protein resides in the secreted. In terms of biological role, exerts antimicrobial activity against both Gram-positive and negative bacteria. Its activity appears to be mediated by its ability to damage bacterial membranes. This chain is Antibacterial peptide PMAP-36 (PMAP36), found in Sus scrofa (Pig).